We begin with the raw amino-acid sequence, 531 residues long: Acetate CoA-transferase YdiF (531 aa).

The active-site 5-glutamyl coenzyme A thioester intermediate is the glutamate 333.

It belongs to the 3-oxoacid CoA-transferase family. Homotetramer; dimer of dimers.

It carries out the reaction an acyl-CoA + acetate = a carboxylate + acetyl-CoA. CoA transferase having broad substrate specificity for short-chain acyl-CoA thioesters with the activity decreasing when the length of the carboxylic acid chain exceeds four carbons. May play a role in short-chain fatty acid metabolism in E.coli. The polypeptide is Acetate CoA-transferase YdiF (ydiF) (Escherichia coli (strain K12)).